The sequence spans 199 residues: Recombination protein RecR (199 aa).

The segment at 56 to 71 adopts a C4-type zinc-finger fold; sequence CRSCFNVAQSELCRIC. The region spanning 79–174 is the Toprim domain; the sequence is ALICVVEEPK…RVTRLASGLP (96 aa).

This sequence belongs to the RecR family.

In terms of biological role, may play a role in DNA repair. It seems to be involved in an RecBC-independent recombinational process of DNA repair. It may act with RecF and RecO. This chain is Recombination protein RecR, found in Frankia alni (strain DSM 45986 / CECT 9034 / ACN14a).